We begin with the raw amino-acid sequence, 560 residues long: Dimethylaniline monooxygenase [N-oxide-forming] 4 (560 aa).

Residues 9–13, E32, and 40–41 each bind FAD; these read GAGVS and LW. NADP(+) is bound by residues 60–61 and 195–198; these read TN and TGGD. The helical transmembrane segment at 510-530 threads the bilayer; sequence LSHYLIAWGAPVLLVSLLLIY.

This sequence belongs to the FMO family. FAD serves as cofactor.

The protein localises to the microsome membrane. It is found in the endoplasmic reticulum membrane. It carries out the reaction N,N-dimethylaniline + NADPH + O2 + H(+) = N,N-dimethylaniline N-oxide + NADP(+) + H2O. This protein is involved in the oxidative metabolism of a variety of xenobiotics such as drugs and pesticides. This chain is Dimethylaniline monooxygenase [N-oxide-forming] 4 (Fmo4), found in Mus musculus (Mouse).